The primary structure comprises 155 residues: Small ribosomal subunit protein uS9 (155 aa).

Belongs to the universal ribosomal protein uS9 family.

The protein is Small ribosomal subunit protein uS9 of Sinorhizobium medicae (strain WSM419) (Ensifer medicae).